The primary structure comprises 921 residues: Sodium/calcium exchanger 2 (921 aa).

Residues 1-20 form the signal peptide; it reads MAPLALVGVTLLLAAPPCSG. At 21 to 68 the chain is on the extracellular side; it reads AATPTPSLPPPPANDSDTSTGGCQGSYRCQPGVLLPVWEPDDPSLGDK. The tract at residues 22–42 is disordered; sequence ATPTPSLPPPPANDSDTSTGG. Asn34 carries an N-linked (GlcNAc...) asparagine glycan. Residues 69 to 90 form a helical membrane-spanning segment; it reads AARAVVYFVAMVYMFLGVSIIA. Over 91 to 130 the chain is Cytoplasmic; sequence DRFMAAIEVITSKEKEITITKANGETSVGTVRIWNETVSN. A helical membrane pass occupies residues 131-152; that stretch reads LTLMALGSSAPEILLSVIEVCG. The stretch at 135-175 is one Alpha-1 repeat; that stretch reads ALGSSAPEILLSVIEVCGHNFQAGELGPGTIVGSAAFNMFV. The Extracellular segment spans residues 153–164; that stretch reads HNFQAGELGPGT. The helical transmembrane segment at 165–185 threads the bilayer; the sequence is IVGSAAFNMFVVIAVCIYVIP. The Cytoplasmic portion of the chain corresponds to 186–196; that stretch reads AGESRKIKHLR. A helical membrane pass occupies residues 197–219; sequence VFFVTASWSIFAYVWLYLILAVF. Residues 220–222 are Extracellular-facing; it reads SPG. A helical membrane pass occupies residues 223-246; it reads VVQVWEALLTLVFFPVCVVFAWMA. Residues 247-720 are Cytoplasmic-facing; sequence DKRLLFYKYV…DGSREERLPS (474 aa). The tract at residues 248–267 is putative calmodulin-binding region; it reads KRLLFYKYVYKRYRTDPRSG. Calx-beta domains follow at residues 384 to 483 and 512 to 612; these read GAGE…VRLL and ATVT…IELG. The Ca(2+) site is built by Glu407, Asp443, Asp468, Asp469, Ile471, Glu473, Glu476, Asp518, Asp519, Asp520, Glu536, Asp598, Glu599, and Glu600. At Ser622 the chain carries Phosphoserine. Glu665 lines the Ca(2+) pocket. The chain crosses the membrane as a helical span at residues 721–740; that stretch reads CFDYVMHFLTVFWKVLFACV. At 741–747 the chain is on the extracellular side; it reads PPTEYCH. Residues 748–770 traverse the membrane as a helical segment; that stretch reads GWACFGVSILVIGLLTALIGDLA. Residues 771–772 lie on the Cytoplasmic side of the membrane; sequence SH. A helical transmembrane segment spans residues 773 to 791; sequence FGCTVGLKDSVNAVVFVAL. The stretch at 790–826 is one Alpha-2 repeat; that stretch reads ALGTSIPDTFASKVAALQDQCADASIGNVTGSNAVNV. The Extracellular portion of the chain corresponds to 792–822; sequence GTSIPDTFASKVAALQDQCADASIGNVTGSN. A glycan (N-linked (GlcNAc...) asparagine) is linked at Asn817. Residues 823 to 843 traverse the membrane as a helical segment; that stretch reads AVNVFLGLGVAWSVAAVYWAV. Residues 844 to 854 are Cytoplasmic-facing; it reads QGRPFEVRTGT. The chain crosses the membrane as a helical span at residues 855–875; it reads LAFSVTLFTVFAFVGIAVLLY. Residues 876 to 892 lie on the Extracellular side of the membrane; that stretch reads RRRPHIGGELGGPRGPK. Residues 893–909 form a helical membrane-spanning segment; that stretch reads LATTALFLGLWLLYILF. The Cytoplasmic portion of the chain corresponds to 910-921; sequence ASLEAYCHIRGF.

It belongs to the Ca(2+):cation antiporter (CaCA) (TC 2.A.19) family. SLC8 subfamily.

The protein resides in the cell membrane. It localises to the basolateral cell membrane. Its subcellular location is the perikaryon. The protein localises to the cell projection. It is found in the dendrite. The protein resides in the dendritic spine. The catalysed reaction is Ca(2+)(in) + 3 Na(+)(out) = Ca(2+)(out) + 3 Na(+)(in). Calcium transport is down-regulated by Na(+) and stimulated by Ca(2+). In terms of biological role, mediates the electrogenic exchange of Ca(2+) against Na(+) ions across the cell membrane, and thereby contributes to the regulation of cytoplasmic Ca(2+) levels and Ca(2+)-dependent cellular processes. Contributes to cellular Ca(2+) homeostasis in excitable cells. Contributes to the rapid decrease of cytoplasmic Ca(2+) levels back to baseline after neuronal activation, and thereby contributes to modulate synaptic plasticity, learning and memory. Plays a role in regulating urinary Ca(2+) and Na(+) excretion. The sequence is that of Sodium/calcium exchanger 2 (SLC8A2) from Homo sapiens (Human).